Consider the following 496-residue polypeptide: MAQKLDNFPYHIGREIGTGAFASVRLCYDDNAKIYAVKFVNKKHATSCMNAGVWARRMASEIQLHKLCNGHKNIIHFYNTAENPQWRWVVLEFAQGGDLFDKIEPDVGIDEDVAQFYFAQLMEGISFMHSKGVAHRDLKPENILLDYNGNLKISDFGFASLFSYKGKSRLLNSPVGSPPYAAPEITQQYDGSKVDVWSCGIILFALLLGNTPWDEAISNTGDYLLYKKQCERPSYHPWNLLSPGAYSIITGMLRSDPFKRYSVKHVVQHPWLTSSTPFRTKNGNCADPVALASRLMLKLRIDLDKPRLASSRASQNDSGFSMTQPAFKKNDQKELDRVEVYGALSQPVQLNKNIDVTEILEKDPSLSQFCENEGFIKRLAKKAKNFYEICPPERLTRFYSRASRETIIDHLYDSLRLLAISVTMKYVRNQTILYVNLHDKRKCLLQGVIELTNLGHNLELINFIKRNGDPLEWRKFFKNVVSSIGKPIVLTDVSQN.

One can recognise a Protein kinase domain in the interval 10-272 (YHIGREIGTG…VKHVVQHPWL (263 aa)). Residues 16–24 (IGTGAFASV) and Lys-38 each bind ATP. Asp-137 serves as the catalytic Proton acceptor.

The protein belongs to the protein kinase superfamily. CAMK Ser/Thr protein kinase family. NIM1 subfamily. In terms of assembly, interacts with crb2. Interacts with rad3. Interacts with rfp1. Post-translationally, phosphorylated.

Its subcellular location is the nucleus. The catalysed reaction is L-seryl-[protein] + ATP = O-phospho-L-seryl-[protein] + ADP + H(+). It carries out the reaction L-threonyl-[protein] + ATP = O-phospho-L-threonyl-[protein] + ADP + H(+). Serine/threonine-protein kinase which is required for checkpoint-mediated cell cycle arrest and activation of DNA repair in response to the presence of DNA damage or unreplicated DNA. May also negatively regulate cell cycle progression during unperturbed cell cycles. Binds to and phosphorylates CDC25. This leads to negative regulation of CDC25 and prevents mitotic entry. The protein is Serine/threonine-protein kinase chk1 (chk1) of Schizosaccharomyces pombe (strain 972 / ATCC 24843) (Fission yeast).